A 979-amino-acid chain; its full sequence is Glycine dehydrogenase (decarboxylating) (979 aa).

K726 carries the N6-(pyridoxal phosphate)lysine modification.

The protein belongs to the GcvP family. In terms of assembly, the glycine cleavage system is composed of four proteins: P, T, L and H. Requires pyridoxal 5'-phosphate as cofactor.

It catalyses the reaction N(6)-[(R)-lipoyl]-L-lysyl-[glycine-cleavage complex H protein] + glycine + H(+) = N(6)-[(R)-S(8)-aminomethyldihydrolipoyl]-L-lysyl-[glycine-cleavage complex H protein] + CO2. Functionally, the glycine cleavage system catalyzes the degradation of glycine. The P protein binds the alpha-amino group of glycine through its pyridoxal phosphate cofactor; CO(2) is released and the remaining methylamine moiety is then transferred to the lipoamide cofactor of the H protein. The polypeptide is Glycine dehydrogenase (decarboxylating) (Ralstonia pickettii (strain 12J)).